We begin with the raw amino-acid sequence, 376 residues long: Queuine tRNA-ribosyltransferase (376 aa).

The active-site Proton acceptor is aspartate 90. Substrate contacts are provided by residues 90–94, aspartate 144, glutamine 193, and glycine 220; that span reads DSGGF. The interval 251–257 is RNA binding; it reads GVGTPED. The active-site Nucleophile is aspartate 270. An RNA binding; important for wobble base 34 recognition region spans residues 275–279; it reads TRNAR. 4 residues coordinate Zn(2+): cysteine 308, cysteine 310, cysteine 313, and histidine 339.

The protein belongs to the queuine tRNA-ribosyltransferase family. As to quaternary structure, homodimer. Within each dimer, one monomer is responsible for RNA recognition and catalysis, while the other monomer binds to the replacement base PreQ1. It depends on Zn(2+) as a cofactor.

The enzyme catalyses 7-aminomethyl-7-carbaguanine + guanosine(34) in tRNA = 7-aminomethyl-7-carbaguanosine(34) in tRNA + guanine. It participates in tRNA modification; tRNA-queuosine biosynthesis. Catalyzes the base-exchange of a guanine (G) residue with the queuine precursor 7-aminomethyl-7-deazaguanine (PreQ1) at position 34 (anticodon wobble position) in tRNAs with GU(N) anticodons (tRNA-Asp, -Asn, -His and -Tyr). Catalysis occurs through a double-displacement mechanism. The nucleophile active site attacks the C1' of nucleotide 34 to detach the guanine base from the RNA, forming a covalent enzyme-RNA intermediate. The proton acceptor active site deprotonates the incoming PreQ1, allowing a nucleophilic attack on the C1' of the ribose to form the product. After dissociation, two additional enzymatic reactions on the tRNA convert PreQ1 to queuine (Q), resulting in the hypermodified nucleoside queuosine (7-(((4,5-cis-dihydroxy-2-cyclopenten-1-yl)amino)methyl)-7-deazaguanosine). This Cupriavidus metallidurans (strain ATCC 43123 / DSM 2839 / NBRC 102507 / CH34) (Ralstonia metallidurans) protein is Queuine tRNA-ribosyltransferase.